The following is a 246-amino-acid chain: UDP-N-acetyl-D-mannosaminuronic acid transferase (246 aa).

The protein belongs to the glycosyltransferase 26 family.

The catalysed reaction is UDP-N-acetyl-alpha-D-mannosaminouronate + N-acetyl-alpha-D-glucosaminyl-di-trans,octa-cis-undecaprenyl diphosphate = beta-D-ManNAcA-(1-&gt;4)-alpha-D-GlcNAc-di-trans,octa-cis-undecaprenyl diphosphate + UDP + H(+). It participates in bacterial outer membrane biogenesis; enterobacterial common antigen biosynthesis. Functionally, catalyzes the synthesis of Und-PP-GlcNAc-ManNAcA (Lipid II), the second lipid-linked intermediate involved in enterobacterial common antigen (ECA) synthesis. The sequence is that of UDP-N-acetyl-D-mannosaminuronic acid transferase from Escherichia coli (strain ATCC 8739 / DSM 1576 / NBRC 3972 / NCIMB 8545 / WDCM 00012 / Crooks).